Consider the following 453-residue polypeptide: tRNA modification GTPase MnmE (453 aa).

The (6S)-5-formyl-5,6,7,8-tetrahydrofolate site is built by Arg22, Glu79, and Lys119. One can recognise a TrmE-type G domain in the interval 215–376 (GMKVVIAGRP…LKQHLKSLMG (162 aa)). Asn225 is a K(+) binding site. Residues 225–230 (NAGKSS), 244–250 (TEIAGTT), 269–272 (DTAG), and 334–337 (NKAD) each bind GTP. Mg(2+) is bound at residue Ser229. K(+)-binding residues include Thr244, Ile246, and Thr249. Thr250 provides a ligand contact to Mg(2+). Lys453 provides a ligand contact to (6S)-5-formyl-5,6,7,8-tetrahydrofolate.

Belongs to the TRAFAC class TrmE-Era-EngA-EngB-Septin-like GTPase superfamily. TrmE GTPase family. In terms of assembly, homodimer. Heterotetramer of two MnmE and two MnmG subunits. K(+) is required as a cofactor.

The protein resides in the cytoplasm. In terms of biological role, exhibits a very high intrinsic GTPase hydrolysis rate. Involved in the addition of a carboxymethylaminomethyl (cmnm) group at the wobble position (U34) of certain tRNAs, forming tRNA-cmnm(5)s(2)U34. In Shewanella sp. (strain MR-7), this protein is tRNA modification GTPase MnmE.